The chain runs to 209 residues: D-aminoacyl-tRNA deacylase 1 (209 aa).

Mg(2+)-binding residues include valine 4, glutamine 6, and cysteine 28. Residues 139–140 carry the Gly-cisPro motif, important for rejection of L-amino acids motif; that stretch reads GP. The interval 142–209 is disordered; that stretch reads TIELESPAPG…EGDVSSEREP (68 aa). Basic and acidic residues-rich tracts occupy residues 159–170 and 181–194; these read QLSKLEKQQQRK and SSKE…EDRS. Phosphoserine occurs at positions 197, 204, and 205.

This sequence belongs to the DTD family. As to quaternary structure, homodimer. Interacts with CDC45 and TOPBP1. Post-translationally, preferentially phosphorylated in cells arrested early in S phase. Phosphorylation in the C-terminus weakens the interaction with CDC45.

The protein resides in the nucleus. It localises to the cytoplasm. The enzyme catalyses glycyl-tRNA(Ala) + H2O = tRNA(Ala) + glycine + H(+). The catalysed reaction is a D-aminoacyl-tRNA + H2O = a tRNA + a D-alpha-amino acid + H(+). Its function is as follows. An aminoacyl-tRNA editing enzyme that deacylates mischarged D-aminoacyl-tRNAs. Also deacylates mischarged glycyl-tRNA(Ala), protecting cells against glycine mischarging by AlaRS. Acts via tRNA-based rather than protein-based catalysis; rejects L-amino acids rather than detecting D-amino acids in the active site. By recycling D-aminoacyl-tRNA to D-amino acids and free tRNA molecules, this enzyme counteracts the toxicity associated with the formation of D-aminoacyl-tRNA entities in vivo and helps enforce protein L-homochirality. ATPase involved in DNA replication, may facilitate loading of CDC45 onto pre-replication complexes. In Bos taurus (Bovine), this protein is D-aminoacyl-tRNA deacylase 1 (DTD1).